Here is a 304-residue protein sequence, read N- to C-terminus: Acetyl-coenzyme A carboxylase carboxyl transferase subunit beta (304 aa).

Positions Leu-25–Glu-294 constitute a CoA carboxyltransferase N-terminal domain.

The protein belongs to the AccD/PCCB family. As to quaternary structure, acetyl-CoA carboxylase is a heterohexamer composed of biotin carboxyl carrier protein (AccB), biotin carboxylase (AccC) and two subunits each of ACCase subunit alpha (AccA) and ACCase subunit beta (AccD).

Its subcellular location is the cytoplasm. It carries out the reaction N(6)-carboxybiotinyl-L-lysyl-[protein] + acetyl-CoA = N(6)-biotinyl-L-lysyl-[protein] + malonyl-CoA. Its pathway is lipid metabolism; malonyl-CoA biosynthesis; malonyl-CoA from acetyl-CoA: step 1/1. Component of the acetyl coenzyme A carboxylase (ACC) complex. Biotin carboxylase (BC) catalyzes the carboxylation of biotin on its carrier protein (BCCP) and then the CO(2) group is transferred by the transcarboxylase to acetyl-CoA to form malonyl-CoA. The sequence is that of Acetyl-coenzyme A carboxylase carboxyl transferase subunit beta from Rhizobium meliloti (strain 1021) (Ensifer meliloti).